A 305-amino-acid polypeptide reads, in one-letter code: Carbonic anhydrase 4 (305 aa).

Positions 1 to 17 (MQLLLALLALAYVAPST) are cleaved as a signal peptide. The Alpha-carbonic anhydrase domain occupies 20–278 (SGWCYEIQTK…LGKRQVFKSH (259 aa)). Cystine bridges form between Cys23/Cys35 and Cys45/Cys222. Catalysis depends on His87, which acts as the Proton donor/acceptor. The Zn(2+) site is built by His114 and His116. A glycan (N-linked (GlcNAc...) asparagine) is linked at Asn123. His139 is a Zn(2+) binding site. Asn214 carries an N-linked (GlcNAc...) asparagine glycan. Position 218-219 (218-219 (TT)) interacts with substrate. Ser277 carries the GPI-anchor amidated serine lipid modification. Positions 278 to 305 (HAPGQLLSLPLPTLLVPTLTCLVANFLQ) are cleaved as a propeptide — removed in mature form.

Belongs to the alpha-carbonic anhydrase family. As to quaternary structure, interacts with SLC4A4. The cofactor is Zn(2+).

It is found in the cell membrane. The catalysed reaction is hydrogencarbonate + H(+) = CO2 + H2O. Inhibited by acetazolamide. In terms of biological role, catalyzes the reversible hydration of carbon dioxide into bicarbonate and protons and thus is essential to maintaining intracellular and extracellular pH. May stimulate the sodium/bicarbonate transporter activity of SLC4A4 that acts in pH homeostasis. It is essential for acid overload removal from the retina and retina epithelium, and acid release in the choriocapillaris in the choroid. The sequence is that of Carbonic anhydrase 4 (Ca4) from Mus musculus (Mouse).